The chain runs to 261 residues: Glucosamine-6-phosphate deaminase (261 aa).

Catalysis depends on Asp-67, which acts as the Proton acceptor; for enolization step. The active-site For ring-opening step is the Asp-136. His-138 functions as the Proton acceptor; for ring-opening step in the catalytic mechanism. The active-site For ring-opening step is the Glu-143.

The protein belongs to the glucosamine/galactosamine-6-phosphate isomerase family. NagB subfamily.

It carries out the reaction alpha-D-glucosamine 6-phosphate + H2O = beta-D-fructose 6-phosphate + NH4(+). The protein operates within amino-sugar metabolism; N-acetylneuraminate degradation; D-fructose 6-phosphate from N-acetylneuraminate: step 5/5. Its function is as follows. Catalyzes the reversible isomerization-deamination of glucosamine 6-phosphate (GlcN6P) to form fructose 6-phosphate (Fru6P) and ammonium ion. In Streptomyces avermitilis (strain ATCC 31267 / DSM 46492 / JCM 5070 / NBRC 14893 / NCIMB 12804 / NRRL 8165 / MA-4680), this protein is Glucosamine-6-phosphate deaminase.